Reading from the N-terminus, the 150-residue chain is D-aminoacyl-tRNA deacylase (150 aa).

The short motif at 137–138 (GP) is the Gly-cisPro motif, important for rejection of L-amino acids element.

It belongs to the DTD family. As to quaternary structure, homodimer.

The protein localises to the cytoplasm. The catalysed reaction is glycyl-tRNA(Ala) + H2O = tRNA(Ala) + glycine + H(+). The enzyme catalyses a D-aminoacyl-tRNA + H2O = a tRNA + a D-alpha-amino acid + H(+). An aminoacyl-tRNA editing enzyme that deacylates mischarged D-aminoacyl-tRNAs. Also deacylates mischarged glycyl-tRNA(Ala), protecting cells against glycine mischarging by AlaRS. Acts via tRNA-based rather than protein-based catalysis; rejects L-amino acids rather than detecting D-amino acids in the active site. By recycling D-aminoacyl-tRNA to D-amino acids and free tRNA molecules, this enzyme counteracts the toxicity associated with the formation of D-aminoacyl-tRNA entities in vivo and helps enforce protein L-homochirality. This is D-aminoacyl-tRNA deacylase from Heliobacterium modesticaldum (strain ATCC 51547 / Ice1).